The sequence spans 154 residues: Transcriptional repressor NrdR (154 aa).

Residues 3-34 (CPFCNHGELKVIDSRNAPESNAIKRRRECLRC) fold into a zinc finger. In terms of domain architecture, ATP-cone spans 48–138 (VQVLKRDGRY…VYRRFKDVGE (91 aa)).

The protein belongs to the NrdR family. The cofactor is Zn(2+).

Its function is as follows. Negatively regulates transcription of bacterial ribonucleotide reductase nrd genes and operons by binding to NrdR-boxes. In Chlamydia trachomatis serovar L2 (strain ATCC VR-902B / DSM 19102 / 434/Bu), this protein is Transcriptional repressor NrdR.